Reading from the N-terminus, the 543-residue chain is Chaperonin GroEL (543 aa).

Residues 29–32 (TLGP), 86–90 (DGTTT), glycine 413, 476–478 (NAA), and aspartate 492 contribute to the ATP site.

Belongs to the chaperonin (HSP60) family. As to quaternary structure, forms a cylinder of 14 subunits composed of two heptameric rings stacked back-to-back. Interacts with the co-chaperonin GroES.

It localises to the cytoplasm. The enzyme catalyses ATP + H2O + a folded polypeptide = ADP + phosphate + an unfolded polypeptide.. Functionally, together with its co-chaperonin GroES, plays an essential role in assisting protein folding. The GroEL-GroES system forms a nano-cage that allows encapsulation of the non-native substrate proteins and provides a physical environment optimized to promote and accelerate protein folding. This chain is Chaperonin GroEL, found in Streptococcus pyogenes serotype M3 (strain SSI-1).